Here is a 381-residue protein sequence, read N- to C-terminus: Homoserine O-succinyltransferase (381 aa).

The AB hydrolase-1 domain occupies 45–360 (NAVLVCHALN…PHGHDAFLLD (316 aa)). Ser-151 acts as the Nucleophile in catalysis. Arg-221 lines the substrate pocket. Residues Asp-321 and His-354 contribute to the active site. A substrate-binding site is contributed by Asp-355.

It belongs to the AB hydrolase superfamily. MetX family. In terms of assembly, homodimer.

The protein localises to the cytoplasm. It catalyses the reaction L-homoserine + succinyl-CoA = O-succinyl-L-homoserine + CoA. Its pathway is amino-acid biosynthesis; L-methionine biosynthesis via de novo pathway; O-succinyl-L-homoserine from L-homoserine: step 1/1. Functionally, transfers a succinyl group from succinyl-CoA to L-homoserine, forming succinyl-L-homoserine. This chain is Homoserine O-succinyltransferase, found in Burkholderia vietnamiensis (strain G4 / LMG 22486) (Burkholderia cepacia (strain R1808)).